Here is a 185-residue protein sequence, read N- to C-terminus: MISVNDFKTGVTIELEGQAFQVVEFMHVKPGKGSAFVRAKLKNVKTGGTVEKTFRGGEKVPRAHLDKREMQYLYNDGEGYVCMDTENYEQISISKESIGEGAKWLMENMILGVLFFQGNIIGVDLPNFVEMLVVDTEPGVKGDTATGAVKNATLESGAVVQVPLFVNTGDRLRIDIRTGEYMERV.

The protein belongs to the elongation factor P family.

It is found in the cytoplasm. It functions in the pathway protein biosynthesis; polypeptide chain elongation. Functionally, involved in peptide bond synthesis. Stimulates efficient translation and peptide-bond synthesis on native or reconstituted 70S ribosomes in vitro. Probably functions indirectly by altering the affinity of the ribosome for aminoacyl-tRNA, thus increasing their reactivity as acceptors for peptidyl transferase. The sequence is that of Elongation factor P from Syntrophomonas wolfei subsp. wolfei (strain DSM 2245B / Goettingen).